Consider the following 317-residue polypeptide: tRNA(Met) cytidine acetate ligase (317 aa).

ATP contacts are provided by residues 6 to 19 (IAEY…HIYQ), Gly-100, Asn-157, and Arg-182.

It belongs to the TmcAL family.

The protein resides in the cytoplasm. It catalyses the reaction cytidine(34) in elongator tRNA(Met) + acetate + ATP = N(4)-acetylcytidine(34) in elongator tRNA(Met) + AMP + diphosphate. Catalyzes the formation of N(4)-acetylcytidine (ac(4)C) at the wobble position of elongator tRNA(Met), using acetate and ATP as substrates. First activates an acetate ion to form acetyladenylate (Ac-AMP) and then transfers the acetyl group to tRNA to form ac(4)C34. This is tRNA(Met) cytidine acetate ligase from Mesomycoplasma hyopneumoniae (strain J / ATCC 25934 / NCTC 10110) (Mycoplasma hyopneumoniae).